Reading from the N-terminus, the 342-residue chain is Glycerol-3-phosphate dehydrogenase [NAD(P)+] (342 aa).

NADPH is bound by residues S13, W14, and K108. The sn-glycerol 3-phosphate site is built by K108, G139, and S141. Residue A143 coordinates NADPH. Sn-glycerol 3-phosphate is bound by residues K194, D247, S257, R258, and N259. The active-site Proton acceptor is K194. R258 is a binding site for NADPH. NADPH is bound by residues V282 and E284.

The protein belongs to the NAD-dependent glycerol-3-phosphate dehydrogenase family.

It localises to the cytoplasm. The catalysed reaction is sn-glycerol 3-phosphate + NAD(+) = dihydroxyacetone phosphate + NADH + H(+). It catalyses the reaction sn-glycerol 3-phosphate + NADP(+) = dihydroxyacetone phosphate + NADPH + H(+). Its pathway is membrane lipid metabolism; glycerophospholipid metabolism. Its function is as follows. Catalyzes the reduction of the glycolytic intermediate dihydroxyacetone phosphate (DHAP) to sn-glycerol 3-phosphate (G3P), the key precursor for phospholipid synthesis. This is Glycerol-3-phosphate dehydrogenase [NAD(P)+] from Lactococcus lactis subsp. cremoris (strain SK11).